A 542-amino-acid chain; its full sequence is Phosphoenolpyruvate carboxykinase (ATP) (542 aa).

Positions 67, 208, and 214 each coordinate substrate. ATP contacts are provided by residues K214, H233, and G249–T257. K214 and H233 together coordinate Mn(2+). Residue D270 participates in Mn(2+) binding. ATP contacts are provided by residues E298, R334, R450–I451, and T456. Substrate is bound at residue R334.

Belongs to the phosphoenolpyruvate carboxykinase (ATP) family. As to quaternary structure, monomer. Mn(2+) is required as a cofactor.

It is found in the cytoplasm. It catalyses the reaction oxaloacetate + ATP = phosphoenolpyruvate + ADP + CO2. It functions in the pathway carbohydrate biosynthesis; gluconeogenesis. Its function is as follows. Involved in the gluconeogenesis. Catalyzes the conversion of oxaloacetate (OAA) to phosphoenolpyruvate (PEP) through direct phosphoryl transfer between the nucleoside triphosphate and OAA. The sequence is that of Phosphoenolpyruvate carboxykinase (ATP) from Vibrio cholerae serotype O1 (strain ATCC 39541 / Classical Ogawa 395 / O395).